The following is a 79-amino-acid chain: Acyl carrier protein (79 aa).

In terms of domain architecture, Carrier spans 2–77 (DNIEQRVKKI…LAIDFAKSKA (76 aa)). Residue Ser-37 is modified to O-(pantetheine 4'-phosphoryl)serine.

The protein belongs to the acyl carrier protein (ACP) family. In terms of processing, 4'-phosphopantetheine is transferred from CoA to a specific serine of apo-ACP by AcpS. This modification is essential for activity because fatty acids are bound in thioester linkage to the sulfhydryl of the prosthetic group.

The protein resides in the cytoplasm. Its pathway is lipid metabolism; fatty acid biosynthesis. In terms of biological role, carrier of the growing fatty acid chain in fatty acid biosynthesis. The sequence is that of Acyl carrier protein from Polynucleobacter necessarius subsp. necessarius (strain STIR1).